Consider the following 353-residue polypeptide: Photosystem II D2 protein (353 aa).

Thr-2 is modified (N-acetylthreonine). Thr-2 carries the post-translational modification Phosphothreonine. A helical transmembrane segment spans residues 41 to 61; sequence CAYFALGGWFTGTTFVTSWYT. His-118 contributes to the chlorophyll a binding site. The chain crosses the membrane as a helical span at residues 125-141; sequence GFMLRQFELARSVQLRP. Residues Gln-130 and Asn-143 each contribute to the pheophytin a site. A helical membrane pass occupies residues 153-166; the sequence is VFVSVFLIYPLGQS. Chlorophyll a is bound at residue His-198. A helical membrane pass occupies residues 208–228; sequence AALLCAIHGATVENTLFEDGD. His-215 and Phe-262 together coordinate a plastoquinone. Fe cation is bound at residue His-215. His-269 is a binding site for Fe cation. The helical transmembrane segment at 279-295 threads the bilayer; the sequence is GSWMSAIGVVGLALNLR.

Belongs to the reaction center PufL/M/PsbA/D family. As to quaternary structure, PSII is composed of 1 copy each of membrane proteins PsbA, PsbB, PsbC, PsbD, PsbE, PsbF, PsbH, PsbI, PsbJ, PsbK, PsbL, PsbM, PsbT, PsbX, PsbY, PsbZ, Psb30/Ycf12, at least 3 peripheral proteins of the oxygen-evolving complex and a large number of cofactors. It forms dimeric complexes. The D1/D2 heterodimer binds P680, chlorophylls that are the primary electron donor of PSII, and subsequent electron acceptors. It shares a non-heme iron and each subunit binds pheophytin, quinone, additional chlorophylls, carotenoids and lipids. There is also a Cl(-1) ion associated with D1 and D2, which is required for oxygen evolution. The PSII complex binds additional chlorophylls, carotenoids and specific lipids. serves as cofactor.

The protein resides in the plastid. It is found in the chloroplast thylakoid membrane. The enzyme catalyses 2 a plastoquinone + 4 hnu + 2 H2O = 2 a plastoquinol + O2. Photosystem II (PSII) is a light-driven water:plastoquinone oxidoreductase that uses light energy to abstract electrons from H(2)O, generating O(2) and a proton gradient subsequently used for ATP formation. It consists of a core antenna complex that captures photons, and an electron transfer chain that converts photonic excitation into a charge separation. The D1/D2 (PsbA/PsbD) reaction center heterodimer binds P680, the primary electron donor of PSII as well as several subsequent electron acceptors. D2 is needed for assembly of a stable PSII complex. The polypeptide is Photosystem II D2 protein (Pinus koraiensis (Korean pine)).